The following is a 244-amino-acid chain: Glutathione S-transferase theta-2 (244 aa).

Residues 2–82 enclose the GST N-terminal domain; the sequence is GLELYLDLLS…YLSSKYQVAD (81 aa). Residues 40-41, 53-54, 66-67, and 104-107 contribute to the glutathione site; these read HL, KV, ES, and DNIR. In terms of domain architecture, GST C-terminal spans 88–230; that stretch reads DLQARAQVHE…AKKTLPVPPP (143 aa).

This sequence belongs to the GST superfamily. Theta family. As to quaternary structure, homodimer. As to expression, highest values found in liver followed by testis, adrenal gland, kidney, lung, brain and skeletal muscle. In liver, highest expression found in central vein limiting plate hepatocytes. In lung, expressed mainly in club cells of the bronchiolar epithelium and, at low levels, in type II alveolar cells.

Its subcellular location is the cytoplasm. It is found in the cytosol. It localises to the nucleus. The enzyme catalyses RX + glutathione = an S-substituted glutathione + a halide anion + H(+). Functionally, catalyzes the inactivation of reactive sulfate esters in carcinogenic arylmethanols. Highest activity towards ethacrynic acid and cumene hydroperoxide. In Rattus norvegicus (Rat), this protein is Glutathione S-transferase theta-2 (Gstt2).